The chain runs to 351 residues: Phospho-N-acetylmuramoyl-pentapeptide-transferase (351 aa).

The next 10 membrane-spanning stretches (helical) occupy residues 17–37 (MAYATIFAFLLSLIVGPHIIL), 62–82 (GIPTMGGILIFFCVFISLVFW), 85–105 (ILNVYFLIIVFVMFGFAFLGF), 130–150 (IIFSFISVSILYYLGGEHVSI), 163–183 (LGVFYIPFGMFILIAASNSFN), 190–210 (GLAIGLSIVITGALIIIAYIT), 230–250 (LVIFLGALLGGSFGFLWFNAY), 254–274 (IMMGDTGSLALGAILGMTALI), 281–301 (FSILAGVFIIETMSVIIQVIV), and 328–348 (QVVIRFWIIGLIFAIIALSTI).

Belongs to the glycosyltransferase 4 family. MraY subfamily. Mg(2+) serves as cofactor.

The protein localises to the cell inner membrane. The catalysed reaction is UDP-N-acetyl-alpha-D-muramoyl-L-alanyl-gamma-D-glutamyl-meso-2,6-diaminopimeloyl-D-alanyl-D-alanine + di-trans,octa-cis-undecaprenyl phosphate = di-trans,octa-cis-undecaprenyl diphospho-N-acetyl-alpha-D-muramoyl-L-alanyl-D-glutamyl-meso-2,6-diaminopimeloyl-D-alanyl-D-alanine + UMP. It participates in cell wall biogenesis; peptidoglycan biosynthesis. In terms of biological role, catalyzes the initial step of the lipid cycle reactions in the biosynthesis of the cell wall peptidoglycan: transfers peptidoglycan precursor phospho-MurNAc-pentapeptide from UDP-MurNAc-pentapeptide onto the lipid carrier undecaprenyl phosphate, yielding undecaprenyl-pyrophosphoryl-MurNAc-pentapeptide, known as lipid I. The protein is Phospho-N-acetylmuramoyl-pentapeptide-transferase of Borreliella afzelii (strain PKo) (Borrelia afzelii).